The sequence spans 981 residues: MPHGDLPLPPSYRPHEVKKAVEEFWRRNRIFEKWKSWRGGPKFTFLEGPPTTNGMPHVGHIRGRTYKDVVIRFYRLLGYDVWVQGGWDMQGMPVEWEVEKKLKLRSKKDIEQFGLEKFALECNSLVEEYLAYWREWGTKRLGLWLDLENAYETRQPHYLQYAWRIVKRAHELGLLTEDYRVLWFCPRCETSLSDHEVALGYDEREDPSIYVKFRVEGGVDEYLVIWTTTPWTIVDNEAVAVHPDYVYAKVEVEVGGRREYWWLAEALVPSLMAKFGIKTWRVVETKKGVELAGVRYIHPLAEEVPERASRPHQVVTAEFVTLEQGTGLVHIAPGHGPEDFELAKKYGLPVTNSVEINGIYNELGGRYKGKHVYDVDKEVTRDLRSKGLLVFEEKIRHEYPHCWRCGSKLILRADRQWFIAISRIRDKMYAELQKVNVVPTKLRDRFDIFVQNARDWNISRSRVWGTPLPVWRCKKDGRILVIGSLEELKKLAKELPPVDDFKLVHRPWIDQVKISAHDCDEWVREPYVMDVWLDSGIAWIAAVDGENNRDLWEKLFPYDFVTEGIDQTRGWFYSLLATSVLYTGRAPYKNVLIQGLILDKHGQKMSKSKGNVIWAKDLFEKYGADPVRLYILSKVAPWEDLSFDPDEVKYVIGDLNILWNVVKFADTYMSLDGFDAEKYPLSQWLEKGLEEDKWILSELNIMISEFTNFVKNFEFHKAAALWREFVVETLSHRYIRLLRRRVWSEEPSPDKYAAYAVLHDVLKKVLILGSILVPFITEYLWQAYVRKYEKNAPESVHLAQYPAAGSYDKELIYAYRELFAVFSALAEARNKAGIKLRWPIREAYVNGAKYAERYTELLKYLGNVKEVKVGRRPDYLCVKEGELEVCVPDKIEPELYYEALARELIRRIQVMRKETGLEISDEIHVVVETNSDDIKKAVEQYRDYIARETRAVKLIIDAVSQGKEWDISGEKVKIEIRKAQA.

The 'HIGH' region signature appears at P50–H60. A 'KMSKS' region motif is present at residues K604–S608. Residue K607 coordinates ATP.

It belongs to the class-I aminoacyl-tRNA synthetase family. IleS type 2 subfamily. Monomer. The cofactor is Zn(2+).

The protein resides in the cytoplasm. It catalyses the reaction tRNA(Ile) + L-isoleucine + ATP = L-isoleucyl-tRNA(Ile) + AMP + diphosphate. In terms of biological role, catalyzes the attachment of isoleucine to tRNA(Ile). As IleRS can inadvertently accommodate and process structurally similar amino acids such as valine, to avoid such errors it has two additional distinct tRNA(Ile)-dependent editing activities. One activity is designated as 'pretransfer' editing and involves the hydrolysis of activated Val-AMP. The other activity is designated 'posttransfer' editing and involves deacylation of mischarged Val-tRNA(Ile). The sequence is that of Isoleucine--tRNA ligase from Pyrobaculum aerophilum (strain ATCC 51768 / DSM 7523 / JCM 9630 / CIP 104966 / NBRC 100827 / IM2).